The chain runs to 448 residues: Cysteine--tRNA ligase (448 aa).

C27 is a Zn(2+) binding site. The short motif at 29–39 (PTVYNYIHVGN) is the 'HIGH' region element. 3 residues coordinate Zn(2+): C210, H235, and E239. The 'KMSKS' region signature appears at 267–271 (KMSKS). K270 serves as a coordination point for ATP.

It belongs to the class-I aminoacyl-tRNA synthetase family. As to quaternary structure, monomer. Zn(2+) serves as cofactor.

It localises to the cytoplasm. It catalyses the reaction tRNA(Cys) + L-cysteine + ATP = L-cysteinyl-tRNA(Cys) + AMP + diphosphate. This Lactococcus lactis subsp. cremoris (strain SK11) protein is Cysteine--tRNA ligase.